A 202-amino-acid chain; its full sequence is Small ribosomal subunit protein uS5 (202 aa).

The region spanning Leu-50–Val-113 is the S5 DRBM domain.

The protein belongs to the universal ribosomal protein uS5 family. As to quaternary structure, part of the 30S ribosomal subunit. Contacts protein S4.

Its function is as follows. With S4 and S12 plays an important role in translational accuracy. The sequence is that of Small ribosomal subunit protein uS5 from Pyrobaculum calidifontis (strain DSM 21063 / JCM 11548 / VA1).